Here is a 251-residue protein sequence, read N- to C-terminus: Ubiquinone/menaquinone biosynthesis C-methyltransferase UbiE (251 aa).

S-adenosyl-L-methionine contacts are provided by residues Thr-74, Asp-95, 123 to 124, and Ser-140; that span reads NA.

The protein belongs to the class I-like SAM-binding methyltransferase superfamily. MenG/UbiE family.

The enzyme catalyses a 2-demethylmenaquinol + S-adenosyl-L-methionine = a menaquinol + S-adenosyl-L-homocysteine + H(+). It carries out the reaction a 2-methoxy-6-(all-trans-polyprenyl)benzene-1,4-diol + S-adenosyl-L-methionine = a 5-methoxy-2-methyl-3-(all-trans-polyprenyl)benzene-1,4-diol + S-adenosyl-L-homocysteine + H(+). It functions in the pathway quinol/quinone metabolism; menaquinone biosynthesis; menaquinol from 1,4-dihydroxy-2-naphthoate: step 2/2. It participates in cofactor biosynthesis; ubiquinone biosynthesis. Functionally, methyltransferase required for the conversion of demethylmenaquinol (DMKH2) to menaquinol (MKH2) and the conversion of 2-polyprenyl-6-methoxy-1,4-benzoquinol (DDMQH2) to 2-polyprenyl-3-methyl-6-methoxy-1,4-benzoquinol (DMQH2). This is Ubiquinone/menaquinone biosynthesis C-methyltransferase UbiE from Klebsiella pneumoniae subsp. pneumoniae (strain ATCC 700721 / MGH 78578).